We begin with the raw amino-acid sequence, 172 residues long: Neudesin (172 aa).

A signal peptide spans 1-31 (MVGPAPRRRLRPLAALALVLALAPGLPTARA). The 86-residue stretch at 44 to 129 (VRLFTEEELA…KELEALDEVF (86 aa)) folds into the Cytochrome b5 heme-binding domain. Position 136 is an N6-acetyllysine (Lys-136). The tract at residues 151 to 172 (DGSPNLDFKPEDQPHFDIKDEF) is disordered. The segment covering 158 to 172 (FKPEDQPHFDIKDEF) has biased composition (basic and acidic residues).

It belongs to the cytochrome b5 family. MAPR subfamily. In terms of assembly, interacts with PINK1 and PARK7. As to expression, ubiquitously expressed with high expression in heart. Over-expressed in various tumors including carcinomas of the uterine cervix, lymphoma, colon, lung, skin and leukemia, as well as carcinoma of the breast.

The protein resides in the secreted. The protein localises to the extracellular space. Its subcellular location is the mitochondrion. It localises to the endoplasmic reticulum. Acts as a neurotrophic factor in postnatal mature neurons enhancing neuronal survival. Promotes cell proliferation and neurogenesis in undifferentiated neural progenitor cells at the embryonic stage and inhibits differentiation of astrocytes. Its neurotrophic activity is exerted via MAPK1/ERK2, MAPK3/ERK1 and AKT1/AKT pathways. Neurotrophic activity is enhanced by binding to heme. Also acts as an anorexigenic neurotrophic factor that contributes to energy balance. This is Neudesin from Homo sapiens (Human).